The chain runs to 83 residues: Putative membrane protein insertion efficiency factor (83 aa).

This sequence belongs to the UPF0161 family.

It is found in the cell membrane. Its function is as follows. Could be involved in insertion of integral membrane proteins into the membrane. The protein is Putative membrane protein insertion efficiency factor of Streptococcus thermophilus (strain ATCC BAA-250 / LMG 18311).